Consider the following 477-residue polypeptide: Bifunctional protein HldE (477 aa).

The segment at 1-321 is ribokinase; that stretch reads MKILKSFTPR…EYEASLHKST (321 aa). ATP is bound at residue 198–201; it reads NKKE. Residue Asp-266 is part of the active site. A cytidylyltransferase region spans residues 348–477; it reads FTNGCFDILH…IQKIKGDLHV (130 aa).

It in the N-terminal section; belongs to the carbohydrate kinase PfkB family. This sequence in the C-terminal section; belongs to the cytidylyltransferase family. Homodimer.

The enzyme catalyses D-glycero-beta-D-manno-heptose 7-phosphate + ATP = D-glycero-beta-D-manno-heptose 1,7-bisphosphate + ADP + H(+). It carries out the reaction D-glycero-beta-D-manno-heptose 1-phosphate + ATP + H(+) = ADP-D-glycero-beta-D-manno-heptose + diphosphate. The protein operates within nucleotide-sugar biosynthesis; ADP-L-glycero-beta-D-manno-heptose biosynthesis; ADP-L-glycero-beta-D-manno-heptose from D-glycero-beta-D-manno-heptose 7-phosphate: step 1/4. It functions in the pathway nucleotide-sugar biosynthesis; ADP-L-glycero-beta-D-manno-heptose biosynthesis; ADP-L-glycero-beta-D-manno-heptose from D-glycero-beta-D-manno-heptose 7-phosphate: step 3/4. In terms of biological role, catalyzes the phosphorylation of D-glycero-D-manno-heptose 7-phosphate at the C-1 position to selectively form D-glycero-beta-D-manno-heptose-1,7-bisphosphate. Functionally, catalyzes the ADP transfer from ATP to D-glycero-beta-D-manno-heptose 1-phosphate, yielding ADP-D-glycero-beta-D-manno-heptose. In Sulfurimonas denitrificans (strain ATCC 33889 / DSM 1251) (Thiomicrospira denitrificans (strain ATCC 33889 / DSM 1251)), this protein is Bifunctional protein HldE.